We begin with the raw amino-acid sequence, 196 residues long: Alpha-crystallin A chain (196 aa).

The residue at position 1 (Met-1) is an N-acetylmethionine. The interval 1–63 (MDVTIQHPWF…RTVLDSGISE (63 aa)) is required for complex formation with BFSP1 and BFSP2. Gln-6 carries the deamidated glutamine; partial modification. Ser-45 is subject to Phosphoserine. Gln-50 bears the Deamidated glutamine; partial mark. The sHSP domain occupies 76–185 (HAGNPKNNPG…GHSERAIPVS (110 aa)). N6-acetyllysine is present on residues Lys-93 and Lys-122. His-123 is a binding site for Zn(2+). Asn-124 is modified (deamidated asparagine; partial). The Zn(2+) site is built by Glu-125 and His-130. Phosphoserine is present on Ser-145. Asn-146 carries the deamidated asparagine; partial modification. A disordered region spans residues 168-196 (KVQSGLDAGHSERAIPVSREEKPSSAPSS). Position 170 is a deamidated glutamine; partial (Gln-170). Basic and acidic residues predominate over residues 176–190 (GHSERAIPVSREEKP). Zn(2+) is bound at residue His-177. Ser-185 carries an O-linked (GlcNAc) serine glycan.

The protein belongs to the small heat shock protein (HSP20) family. As to quaternary structure, heteropolymer composed of three CRYAA and one CRYAB subunits. Inter-subunit bridging via zinc ions enhances stability, which is crucial as there is no protein turn over in the lens. Can also form homodimers and homotetramers (dimers of dimers) which serve as the building blocks of homooligomers. Within homooligomers, the zinc-binding motif is created from residues of 3 different molecules. His-123 and Glu-125 from one molecule are ligands of the zinc ion, and His-130 and His-177 residues from additional molecules complete the site with tetrahedral coordination geometry. Part of a complex required for lens intermediate filament formation composed of BFSP1, BFSP2 and CRYAA. Acetylation at Lys-93 may increase chaperone activity. Post-translationally, undergoes age-dependent proteolytical cleavage at the C-terminus. Cleavage by m-calpain produces specifically alpha-crystallin A(1-162), cleavage by Capn3/Lp82 produces specifically alpha-crystallin A(1-168) which is the major truncated form during normal maturation and induced cataract formation. In terms of tissue distribution, highly expressed in eye lens. Also expressed in non-lenticular tissues such as brain, spleen, liver, lung, skin, small intestine and a several epithelial and fibroblast cell lines with highest levels in spleen.

It localises to the cytoplasm. The protein localises to the nucleus. Contributes to the transparency and refractive index of the lens. Acts as a chaperone, preventing aggregation of various proteins under a wide range of stress conditions. Required for the correct formation of lens intermediate filaments as part of a complex composed of BFSP1, BFSP2 and CRYAA. In terms of biological role, inhibits bacterial growth in the lens. In Rattus norvegicus (Rat), this protein is Alpha-crystallin A chain (Cryaa).